The chain runs to 112 residues: DNA-binding protein Mboo_1886 (112 aa).

This sequence belongs to the PDCD5 family.

The sequence is that of DNA-binding protein Mboo_1886 from Methanoregula boonei (strain DSM 21154 / JCM 14090 / 6A8).